Reading from the N-terminus, the 338-residue chain is Lipoate-protein ligase A (338 aa).

Positions 29-216 (PATQRVLFLW…AFFAHYGERV (188 aa)) constitute a BPL/LPL catalytic domain. ATP-binding positions include Arg71, 76–79 (GAVF), and Lys134. Lys134 contacts (R)-lipoate.

This sequence belongs to the LplA family. Monomer.

It localises to the cytoplasm. It catalyses the reaction L-lysyl-[lipoyl-carrier protein] + (R)-lipoate + ATP = N(6)-[(R)-lipoyl]-L-lysyl-[lipoyl-carrier protein] + AMP + diphosphate + H(+). It participates in protein modification; protein lipoylation via exogenous pathway; protein N(6)-(lipoyl)lysine from lipoate: step 1/2. The protein operates within protein modification; protein lipoylation via exogenous pathway; protein N(6)-(lipoyl)lysine from lipoate: step 2/2. Catalyzes both the ATP-dependent activation of exogenously supplied lipoate to lipoyl-AMP and the transfer of the activated lipoyl onto the lipoyl domains of lipoate-dependent enzymes. The chain is Lipoate-protein ligase A from Escherichia coli O9:H4 (strain HS).